The chain runs to 152 residues: Nucleoside diphosphate kinase (152 aa).

Lys11, Phe59, Arg87, Thr93, Arg104, and Asn114 together coordinate ATP. His117 serves as the catalytic Pros-phosphohistidine intermediate.

The protein belongs to the NDK family. As to quaternary structure, homotetramer. Requires Mg(2+) as cofactor.

The protein resides in the cytoplasm. It catalyses the reaction dZDP + ATP = dZTP + ADP. The enzyme catalyses a 2'-deoxyribonucleoside 5'-diphosphate + ATP = a 2'-deoxyribonucleoside 5'-triphosphate + ADP. It carries out the reaction a ribonucleoside 5'-diphosphate + ATP = a ribonucleoside 5'-triphosphate + ADP. It participates in purine metabolism. Its function is as follows. Major role in the synthesis of nucleoside triphosphates other than ATP. The ATP gamma phosphate is transferred to the NDP beta phosphate via a ping-pong mechanism, using a phosphorylated active-site intermediate. Functionally, (Microbial infection) Catalyzes the phosphorylation of dZDP to dZTP, when the bacterium is infected by a phage that produces the substrate for the synthesis of dZTP (2- amino-2'-deoxyadenosine 5'-triphosphate), which is then used by the phage as a DNA polymerase substrate. The polypeptide is Nucleoside diphosphate kinase (Synechococcus sp. (strain CC9311)).